A 294-amino-acid polypeptide reads, in one-letter code: MPELPEVETVRRGLIPAMEGVRIARVTAHRNDLRFPLQTDFVARLGGRVVTGLGRRAKYLLADLDSGDVLLMHLGMSGSFRVAMDGGQEATPGIFHHPRSESRTHDHVVFEMDNGAVISFNDPRRFGYMKIVARADLEAEPFLKALGPEPLGNEFNAAMLAQACAGKATSLKAALLDQRVVAGLGNIYVCEALYRAHLSPKRRASTLASRTGAPSGHAERLVPAIRTVLNAAIEAGGSSLRDHRQTTGELGYFQHSFQVYDREGEPCRTRGCKGTVKRFTQNGRSTFWCPSCQK.

Proline 2 (schiff-base intermediate with DNA) is an active-site residue. Glutamate 3 serves as the catalytic Proton donor. Catalysis depends on lysine 58, which acts as the Proton donor; for beta-elimination activity. DNA contacts are provided by histidine 105, arginine 124, and lysine 167. The segment at 258–294 (QVYDREGEPCRTRGCKGTVKRFTQNGRSTFWCPSCQK) adopts an FPG-type zinc-finger fold. Catalysis depends on arginine 284, which acts as the Proton donor; for delta-elimination activity.

This sequence belongs to the FPG family. Monomer. The cofactor is Zn(2+).

It catalyses the reaction Hydrolysis of DNA containing ring-opened 7-methylguanine residues, releasing 2,6-diamino-4-hydroxy-5-(N-methyl)formamidopyrimidine.. The catalysed reaction is 2'-deoxyribonucleotide-(2'-deoxyribose 5'-phosphate)-2'-deoxyribonucleotide-DNA = a 3'-end 2'-deoxyribonucleotide-(2,3-dehydro-2,3-deoxyribose 5'-phosphate)-DNA + a 5'-end 5'-phospho-2'-deoxyribonucleoside-DNA + H(+). Functionally, involved in base excision repair of DNA damaged by oxidation or by mutagenic agents. Acts as a DNA glycosylase that recognizes and removes damaged bases. Has a preference for oxidized purines, such as 7,8-dihydro-8-oxoguanine (8-oxoG). Has AP (apurinic/apyrimidinic) lyase activity and introduces nicks in the DNA strand. Cleaves the DNA backbone by beta-delta elimination to generate a single-strand break at the site of the removed base with both 3'- and 5'-phosphates. The chain is Formamidopyrimidine-DNA glycosylase from Afipia carboxidovorans (strain ATCC 49405 / DSM 1227 / KCTC 32145 / OM5) (Oligotropha carboxidovorans).